The primary structure comprises 1476 residues: MNSSSCDRSFGPYAEGCRGGFDFTLLFEESILVVPITALLLLAAPFRATYLLRKHSVKVEHSYWLYCKIILCLLLLASQIAFLVCWTQSPVVTTKASLPAAALSIVASITLLGLSYVEHVYSYRPSTVLNLFLLFSVLFDATRTRTLWLQGYNRPAAITALISTVVKILMLSAETIEKRGFLRPEYRELPSEVTSGVFSHWFFSWQLPLFRVGYSHDLEIESLFPLEKHFKSSYLQTLLQTAWAKAPKKGDYDLLLVVFKTLKRPILFIIFPRLCFIGFTFCQPFLISATLSWAEKDADSNDMNQGYGLIGAWFLVFIGLAVTTGQYQHLTVRATTMVRGQLISMLYDKASDLSITAANPTAALTLMSADIERIDSGWRTAHDVWANLIEIVIAVYLLGRQLGLACLIPVGAAIFSIVGSVIAVSFVMARQAMWLEAIERRISVTSQMLGSMKGVKMCGLSEVLGTRIQAMREEELHISGKFRRLLIWNMVLAYLAPIFAPVLSFMTYSLLAQSQGGRGNLDTNRMFTSLSLFALLQEPLASFVTSLSSFMGSVGSFVRIQAFLKTDARTDDRIIQYNGETEHSLISGVSSSEEKHPVSPIQESMMKTEPSGDSPDGNAFVIRNASFGYDRNETPTLSNIDAIIPSGKLTLVVGPVGSGKSTLMKALLGEVGIMQGSVHASNSTVAYCDQTPWHMNGTVRESIIAFSRPDERWYQKVLEACALKQDLTQLPRGDLSNIGSRGLVLSGGQSQRVSLARAVYAQKSTIILDDVFSGLDAHTENAVFNNLLGSHGILRDLNTTVIVVSSRVKRLPYADHIICLDGTGTGCVQGTFDKLNESDNYVSHSDVSSPDGARSKAPSSGPASSSAPVPESSAAALAELDMELTESKKDGAGRRSGDVAIYMYYMNAIGWIPTMVFVLAICAYIFCQSFPTIWLNWWAAANAKEPFTRLGYYLGVYAMLGALSIIFLVLSTWQMIVTMVPLSGNNFHQSLLKTVLNAPMSFFAATDAGTTINRFSQDLQLIDMDLPLSALNTFATFVLCIAEMILIAVGSYYTAIAFPFLLATLWVVQHTYLRTSRQLRFMDLEAKSPLYALFTETVTGLATLRAFGWRDALEKKHHELLDRSQRPFYLLYAVQRWLTLVLDMIVTIIAVLVVVLVTQLRGKLPAGLIGVALVNIIQFSQHLKLLMTFWTTLETHIGAISRIKSFTSDTASEHEPQEKEQPPSVWPSKGTILFDQVSAGYKESEDVLKNISLNIEAGQKVGICGRTGSGKSSMVSCLFRMIDLHGGRIIVDGLDISTIPREEIRTRLVGVPQDAFLIDGSSVRLNADPAGGLTDAAIEDALRAVELWDIVTDNGGLDTSIEELHLSHGQRQLFCIGRAILRPSPIVVLDEATSSVDSRVDELVQRLVRERFSNRTVISIVHKLQSALDDFDMVVVLDAGKLQEIGHPQELLAKGPDASTFASMYQSVATEKKEDK.

Residue N2 is glycosylated (N-linked (GlcNAc...) asparagine). The next 10 helical transmembrane spans lie at 23–43, 64–84, 97–117, 156–176, 266–286, 305–325, 384–404, 407–427, 485–505, and 532–552; these read FTLL…LLLA, WLYC…AFLV, SLPA…LSYV, AAIT…AETI, ILFI…QPFL, QGYG…VTTG, VWAN…QLGL, LIPV…VSFV, LLIW…VLSF, and LFAL…SFMG. The 279-residue stretch at 274-552 folds into the ABC transmembrane type-1 1 domain; it reads LCFIGFTFCQ…FVTSLSSFMG (279 aa). The segment at 586–615 is disordered; sequence ISGVSSSEEKHPVSPIQESMMKTEPSGDSP. An ABC transporter 1 domain is found at 622-847; it reads IRNASFGYDR…SDNYVSHSDV (226 aa). N624 is a glycosylation site (N-linked (GlcNAc...) asparagine). Residue 654–661 participates in ATP binding; sequence GPVGSGKS. N682, N696, N798, and N836 each carry an N-linked (GlcNAc...) asparagine glycan. The interval 842 to 870 is disordered; that stretch reads VSHSDVSSPDGARSKAPSSGPASSSAPVP. Residues 855 to 870 show a composition bias toward low complexity; it reads SKAPSSGPASSSAPVP. Helical transmembrane passes span 906-926, 950-970, 1021-1041, 1045-1065, 1137-1157, and 1167-1187; these read MNAI…AYIF, LGYY…FLVL, LIDM…VLCI, ILIA…LATL, WLTL…VVLV, and GLIG…KLLM. The region spanning 916–1195 is the ABC transmembrane type-1 2 domain; it reads VFVLAICAYI…LMTFWTTLET (280 aa). In terms of domain architecture, ABC transporter 2 spans 1232–1464; sequence ILFDQVSAGY…GPDASTFASM (233 aa). N1250 is a glycosylation site (N-linked (GlcNAc...) asparagine). Position 1265 to 1272 (1265 to 1272) interacts with ATP; sequence GRTGSGKS. N-linked (GlcNAc...) asparagine glycosylation occurs at N1414.

It belongs to the ABC transporter superfamily. ABCC family. Conjugate transporter (TC 3.A.1.208) subfamily.

The protein localises to the cell membrane. Functionally, ABC-type transporter; part of the gene cluster that mediates the biosynthesis of the fusahexin, a cyclic hydrophobic hexapeptide with the amino acid sequence cyclo-(D-Ala-L-Leu-D-allo-Thr-L-Pro-D-Leu-L-Leu) that plays an important role in cell surface hydrophobicity. The sequence is that of ABC-type transporter FG02316 from Gibberella zeae (strain ATCC MYA-4620 / CBS 123657 / FGSC 9075 / NRRL 31084 / PH-1) (Wheat head blight fungus).